We begin with the raw amino-acid sequence, 545 residues long: Ubiquitin carboxyl-terminal hydrolase 17-like protein D (545 aa).

The USP domain maps to 51–348 (CGLQNTGNSC…NAYVLFYVQQ (298 aa)). Cys60 acts as the Nucleophile in catalysis. The active-site Proton acceptor is the His307. Disordered stretches follow at residues 367-443 (LDPE…KLGQ) and 521-545 (RQEG…LLVR). A compositionally biased stretch (basic residues) spans 374 to 385 (KKSRRKKHKKKS). Basic and acidic residues predominate over residues 393–404 (EPSKNREKKATK). Positions 524–537 (GRRRSKKGKNKNKQ) are enriched in basic residues.

Belongs to the peptidase C19 family. USP17 subfamily. Detected in T-cell, myeloid, and embryonic stem cell lines.

It localises to the nucleus. The protein localises to the endoplasmic reticulum. The enzyme catalyses Thiol-dependent hydrolysis of ester, thioester, amide, peptide and isopeptide bonds formed by the C-terminal Gly of ubiquitin (a 76-residue protein attached to proteins as an intracellular targeting signal).. Functionally, deubiquitinating enzyme that removes conjugated ubiquitin from specific proteins to regulate different cellular processes that may include cell proliferation, progression through the cell cycle, apoptosis, cell migration, and the cellular response to viral infection. The polypeptide is Ubiquitin carboxyl-terminal hydrolase 17-like protein D (Mus musculus (Mouse)).